The sequence spans 227 residues: Cytochrome c oxidase subunit 2 (227 aa).

Over M1 to S14 the chain is Mitochondrial intermembrane. The chain crosses the membrane as a helical span at residues P15 to M45. Topologically, residues L46 to Q59 are mitochondrial matrix. Residues E60 to M87 form a helical membrane-spanning segment. Over D88 to L227 the chain is Mitochondrial intermembrane. Cu cation-binding residues include H161, C196, E198, C200, H204, and M207. Residue E198 participates in Mg(2+) binding.

Belongs to the cytochrome c oxidase subunit 2 family. Component of the cytochrome c oxidase (complex IV, CIV), a multisubunit enzyme composed of 14 subunits. The complex is composed of a catalytic core of 3 subunits MT-CO1, MT-CO2 and MT-CO3, encoded in the mitochondrial DNA, and 11 supernumerary subunits COX4I, COX5A, COX5B, COX6A, COX6B, COX6C, COX7A, COX7B, COX7C, COX8 and NDUFA4, which are encoded in the nuclear genome. The complex exists as a monomer or a dimer and forms supercomplexes (SCs) in the inner mitochondrial membrane with NADH-ubiquinone oxidoreductase (complex I, CI) and ubiquinol-cytochrome c oxidoreductase (cytochrome b-c1 complex, complex III, CIII), resulting in different assemblies (supercomplex SCI(1)III(2)IV(1) and megacomplex MCI(2)III(2)IV(2)). Found in a complex with TMEM177, COA6, COX18, COX20, SCO1 and SCO2. Interacts with TMEM177 in a COX20-dependent manner. Interacts with COX20. Interacts with COX16. The cofactor is Cu cation.

The protein resides in the mitochondrion inner membrane. It catalyses the reaction 4 Fe(II)-[cytochrome c] + O2 + 8 H(+)(in) = 4 Fe(III)-[cytochrome c] + 2 H2O + 4 H(+)(out). Component of the cytochrome c oxidase, the last enzyme in the mitochondrial electron transport chain which drives oxidative phosphorylation. The respiratory chain contains 3 multisubunit complexes succinate dehydrogenase (complex II, CII), ubiquinol-cytochrome c oxidoreductase (cytochrome b-c1 complex, complex III, CIII) and cytochrome c oxidase (complex IV, CIV), that cooperate to transfer electrons derived from NADH and succinate to molecular oxygen, creating an electrochemical gradient over the inner membrane that drives transmembrane transport and the ATP synthase. Cytochrome c oxidase is the component of the respiratory chain that catalyzes the reduction of oxygen to water. Electrons originating from reduced cytochrome c in the intermembrane space (IMS) are transferred via the dinuclear copper A center (CU(A)) of subunit 2 and heme A of subunit 1 to the active site in subunit 1, a binuclear center (BNC) formed by heme A3 and copper B (CU(B)). The BNC reduces molecular oxygen to 2 water molecules using 4 electrons from cytochrome c in the IMS and 4 protons from the mitochondrial matrix. This Dasypus novemcinctus (Nine-banded armadillo) protein is Cytochrome c oxidase subunit 2 (MT-CO2).